A 374-amino-acid chain; its full sequence is Type IV secretion system protein PtlG (374 aa).

The helical transmembrane segment at 38–56 (WMFALVAVALSCLLATGIW) threads the bilayer. The tract at residues 86 to 117 (HPREPEPAPLPDMPAAPDPILPQPRPAPPVPP) is disordered. Over residues 92-117 (PAPLPDMPAAPDPILPQPRPAPPVPP) the composition is skewed to pro residues.

Belongs to the TrbI/VirB10 family.

The protein localises to the cell membrane. Its function is as follows. Component of the type IV secretion system ptl required for secretion of assembled pertussis toxin (PTX) through the outer membrane. The polypeptide is Type IV secretion system protein PtlG (ptlG) (Bordetella pertussis (strain Tohama I / ATCC BAA-589 / NCTC 13251)).